The chain runs to 450 residues: Folate synthesis bifunctional protein (450 aa).

An HPPK region spans residues methionine 1–proline 166. The region spanning threonine 180–alanine 441 is the Pterin-binding domain. Positions isoleucine 182 to valine 450 are DHPS. Residue asparagine 187 coordinates Mg(2+). Residues threonine 227, aspartate 267, asparagine 287, aspartate 358, lysine 395, and arginine 429 to histidine 431 each bind (7,8-dihydropterin-6-yl)methyl diphosphate.

In the C-terminal section; belongs to the DHPS family. This sequence in the N-terminal section; belongs to the HPPK family. It depends on Mg(2+) as a cofactor.

It catalyses the reaction 6-hydroxymethyl-7,8-dihydropterin + ATP = (7,8-dihydropterin-6-yl)methyl diphosphate + AMP + H(+). The enzyme catalyses (7,8-dihydropterin-6-yl)methyl diphosphate + 4-aminobenzoate = 7,8-dihydropteroate + diphosphate. The protein operates within cofactor biosynthesis; tetrahydrofolate biosynthesis; 2-amino-4-hydroxy-6-hydroxymethyl-7,8-dihydropteridine diphosphate from 7,8-dihydroneopterin triphosphate: step 4/4. It functions in the pathway cofactor biosynthesis; tetrahydrofolate biosynthesis; 7,8-dihydrofolate from 2-amino-4-hydroxy-6-hydroxymethyl-7,8-dihydropteridine diphosphate and 4-aminobenzoate: step 1/2. The protein is Folate synthesis bifunctional protein (folKP) of Chlamydia trachomatis serovar D (strain ATCC VR-885 / DSM 19411 / UW-3/Cx).